We begin with the raw amino-acid sequence, 222 residues long: 2-hydroxy-3-keto-5-methylthiopentenyl-1-phosphate phosphatase (222 aa).

This sequence belongs to the HAD-like hydrolase superfamily. MtnX family.

It carries out the reaction 2-hydroxy-5-methylsulfanyl-3-oxopent-1-enyl phosphate + H2O = 1,2-dihydroxy-5-(methylsulfanyl)pent-1-en-3-one + phosphate. It participates in amino-acid biosynthesis; L-methionine biosynthesis via salvage pathway; L-methionine from S-methyl-5-thio-alpha-D-ribose 1-phosphate: step 4/6. In terms of biological role, dephosphorylates 2-hydroxy-3-keto-5-methylthiopentenyl-1-phosphate (HK-MTPenyl-1-P) yielding 1,2-dihydroxy-3-keto-5-methylthiopentene (DHK-MTPene). In Brevibacillus brevis (strain 47 / JCM 6285 / NBRC 100599), this protein is 2-hydroxy-3-keto-5-methylthiopentenyl-1-phosphate phosphatase.